The chain runs to 301 residues: 2-methoxy-6-polyprenyl-1,4-benzoquinol methylase, mitochondrial (301 aa).

The N-terminal 16 residues, 1–16 (MQTTRSTRLLSLARRF), are a transit peptide targeting the mitochondrion. Positions 20 to 31 (RTASQSAQNSKG) are enriched in polar residues. Positions 20–44 (RTASQSAQNSKGMASGAESISGKEK) are disordered. S-adenosyl-L-methionine is bound by residues Thr111, Asp139, and 173 to 174 (DA).

Belongs to the class I-like SAM-binding methyltransferase superfamily. MenG/UbiE family. Component of a multi-subunit COQ enzyme complex.

Its subcellular location is the mitochondrion inner membrane. The enzyme catalyses a 2-methoxy-6-(all-trans-polyprenyl)benzene-1,4-diol + S-adenosyl-L-methionine = a 5-methoxy-2-methyl-3-(all-trans-polyprenyl)benzene-1,4-diol + S-adenosyl-L-homocysteine + H(+). The protein operates within cofactor biosynthesis; ubiquinone biosynthesis. Functionally, methyltransferase required for the conversion of 2-polyprenyl-6-methoxy-1,4-benzoquinol (DDMQH2) to 2-polyprenyl-3-methyl-6-methoxy-1,4-benzoquinol (DMQH2). The protein is 2-methoxy-6-polyprenyl-1,4-benzoquinol methylase, mitochondrial of Drosophila melanogaster (Fruit fly).